The sequence spans 90 residues: DNA-directed RNA polymerase subunit omega (90 aa).

It belongs to the RNA polymerase subunit omega family. As to quaternary structure, the RNAP catalytic core consists of 2 alpha, 1 beta, 1 beta' and 1 omega subunit. When a sigma factor is associated with the core the holoenzyme is formed, which can initiate transcription.

The catalysed reaction is RNA(n) + a ribonucleoside 5'-triphosphate = RNA(n+1) + diphosphate. Functionally, promotes RNA polymerase assembly. Latches the N- and C-terminal regions of the beta' subunit thereby facilitating its interaction with the beta and alpha subunits. The chain is DNA-directed RNA polymerase subunit omega from Rhodopirellula baltica (strain DSM 10527 / NCIMB 13988 / SH1).